We begin with the raw amino-acid sequence, 398 residues long: MNEQGLSEREIFSYLENAKSEDTDYYRVFSSMCTRPHKIAIEANRLFIEANLGDLGLFAGAHKLEQEVVRMLGNLLHASSIDVPSGGLCQSSVCGYLTTGGTESNIQAVRGMKNLVTAGKKEFKGTPNIVIPASAHFSFDKVADMMGIEVRRASLDSEFRVDMASVEKLINENTIGLVGIAGNTEFGQIDPIDKLSEVALENELFLHVDAAFGGFVIPFLEKPQPFDFKVPGVTSIAIDPHKMGLSTIPSGALLFRSPSFLDSLKVSTPYLTTKSQFTLTGTRSGASAAATCAVMKYLGYEGYRKNVQYCMELTSKIVEEARKLGFEPLIEPVMNVVALKVPNPDLVRERLLKKFGWNVSITRTPRALRLVLMPHNSPEDIELFLEDLKKVTAEIKSP.

An N6-(pyridoxal phosphate)lysine modification is found at Lys242.

Belongs to the group II decarboxylase family. MfnA subfamily. Pyridoxal 5'-phosphate serves as cofactor.

The catalysed reaction is L-tyrosine + H(+) = tyramine + CO2. It catalyses the reaction L-aspartate + H(+) = beta-alanine + CO2. The protein operates within cofactor biosynthesis; methanofuran biosynthesis. It participates in cofactor biosynthesis; coenzyme A biosynthesis. Catalyzes the decarboxylation of L-tyrosine to produce tyramine for methanofuran biosynthesis. Can also catalyze the decarboxylation of L-aspartate to produce beta-alanine for coenzyme A (CoA) biosynthesis. This Methanosarcina mazei (strain ATCC BAA-159 / DSM 3647 / Goe1 / Go1 / JCM 11833 / OCM 88) (Methanosarcina frisia) protein is Probable L-tyrosine/L-aspartate decarboxylase.